Consider the following 406-residue polypeptide: Cysteine desulfurase (406 aa).

Lys226 is modified (N6-(pyridoxal phosphate)lysine). Cys364 serves as the catalytic Cysteine persulfide intermediate.

This sequence belongs to the class-V pyridoxal-phosphate-dependent aminotransferase family. Csd subfamily. Homodimer. Interacts with SufE and the SufBCD complex composed of SufB, SufC and SufD. The interaction with SufE is required to mediate the direct transfer of the sulfur atom from the S-sulfanylcysteine. Requires pyridoxal 5'-phosphate as cofactor.

Its subcellular location is the cytoplasm. The catalysed reaction is (sulfur carrier)-H + L-cysteine = (sulfur carrier)-SH + L-alanine. The enzyme catalyses L-selenocysteine + AH2 = hydrogenselenide + L-alanine + A + H(+). It participates in cofactor biosynthesis; iron-sulfur cluster biosynthesis. In terms of biological role, cysteine desulfurases mobilize the sulfur from L-cysteine to yield L-alanine, an essential step in sulfur metabolism for biosynthesis of a variety of sulfur-containing biomolecules. Component of the suf operon, which is activated and required under specific conditions such as oxidative stress and iron limitation. Acts as a potent selenocysteine lyase in vitro, that mobilizes selenium from L-selenocysteine. Selenocysteine lyase activity is however unsure in vivo. The chain is Cysteine desulfurase from Escherichia coli O8 (strain IAI1).